A 121-amino-acid polypeptide reads, in one-letter code: Small ribosomal subunit protein uS13 (121 aa).

The tract at residues 93-121 (RGLPVRGQNSKNNARTRKGPRRTVANKKK) is disordered. The span at 106-121 (ARTRKGPRRTVANKKK) shows a compositional bias: basic residues.

Belongs to the universal ribosomal protein uS13 family. As to quaternary structure, part of the 30S ribosomal subunit. Forms a loose heterodimer with protein S19. Forms two bridges to the 50S subunit in the 70S ribosome.

In terms of biological role, located at the top of the head of the 30S subunit, it contacts several helices of the 16S rRNA. In the 70S ribosome it contacts the 23S rRNA (bridge B1a) and protein L5 of the 50S subunit (bridge B1b), connecting the 2 subunits; these bridges are implicated in subunit movement. Contacts the tRNAs in the A and P-sites. This is Small ribosomal subunit protein uS13 from Bacillus subtilis (strain 168).